A 1320-amino-acid polypeptide reads, in one-letter code: Protein brunelleschi (1320 aa).

Residues 313–411 (HRNSSLQEAG…IPGHQRNGDL (99 aa)) are disordered. The segment covering 314–327 (RNSSLQEAGTSPLK) has biased composition (polar residues). A Phosphoserine modification is found at serine 317. Threonine 329 is modified (phosphothreonine). Basic and acidic residues predominate over residues 329–340 (TPEKWRASDATK). Positions 345 to 361 (SDATANNVDSNQPQQRV) are enriched in polar residues. Residues 362–400 (TSNSSSCSSVSSLVTTATNSSASDTPTTSSSSTSTISAA) are compositionally biased toward low complexity. Serine 672 carries the phosphoserine modification. Residues 923 to 954 (VSTSGHASLPSRVGSPHHRRNEPQNSSFRSTI) are disordered. The span at 945 to 954 (PQNSSFRSTI) shows a compositional bias: polar residues.

This sequence belongs to the NIBP family. May be part of the multisubunit TRAPP (transport protein particle) complex.

Its subcellular location is the cytoplasm. The protein localises to the golgi apparatus. Its function is as follows. Cooperates with Rab11 and fwd/PI4K to mediate the flow of membrane through the Golgi, which is required to support cleavage furrow ingression, therefore promoting cytokinesis in male meiotic cells. The protein is Protein brunelleschi of Drosophila melanogaster (Fruit fly).